We begin with the raw amino-acid sequence, 251 residues long: 5'-nucleotidase SurE (251 aa).

A divalent metal cation-binding residues include aspartate 8, aspartate 9, serine 40, and asparagine 95.

The protein belongs to the SurE nucleotidase family. A divalent metal cation serves as cofactor.

Its subcellular location is the cytoplasm. It catalyses the reaction a ribonucleoside 5'-phosphate + H2O = a ribonucleoside + phosphate. In terms of biological role, nucleotidase that shows phosphatase activity on nucleoside 5'-monophosphates. The polypeptide is 5'-nucleotidase SurE (Desulfitobacterium hafniense (strain DSM 10664 / DCB-2)).